The chain runs to 637 residues: Chaperone protein HtpG (637 aa).

Residues 1–345 (MSQQETHGFQ…SNDLPLNVSR (345 aa)) are a; substrate-binding. Residues 346–562 (EILQDNHITK…EGEMSTQMIK (217 aa)) are b. Residues 563–637 (LMQAAGQPVP…MNQMLLANMK (75 aa)) form a c region.

The protein belongs to the heat shock protein 90 family. In terms of assembly, homodimer.

The protein resides in the cytoplasm. Molecular chaperone. Has ATPase activity. This chain is Chaperone protein HtpG, found in Shewanella sp. (strain W3-18-1).